The chain runs to 299 residues: MSAVPDAFQRYGAESLAQAPAFGPGKDGVFEATLARTGDRDTRLLRDYTKVPYHLTGTLDTDPAPGLTTLCLQEPTGGVAQGDRHSITVTAREGARARVTTQSATKVHSMQANYAHLDATLEAGPDAHLEYVPGPTIVNEDARCLQTVAVDLAPSATVVVADVFVPGGLSAHEPFDFDHYHSRLEARCEERLVCADAVDLHPADGDPRDPATVADYDVVGTLYVLAPEADTEVLAEAIHARFDAHDAVTAGVSALPYESGVSVRVLGTRSADVTDAVRDAWDASRQELLGVGIPADRRY.

It belongs to the UreD family. As to quaternary structure, ureD, UreF and UreG form a complex that acts as a GTP-hydrolysis-dependent molecular chaperone, activating the urease apoprotein by helping to assemble the nickel containing metallocenter of UreC. The UreE protein probably delivers the nickel.

It is found in the cytoplasm. Its function is as follows. Required for maturation of urease via the functional incorporation of the urease nickel metallocenter. The sequence is that of Urease accessory protein UreD from Natronomonas pharaonis (strain ATCC 35678 / DSM 2160 / CIP 103997 / JCM 8858 / NBRC 14720 / NCIMB 2260 / Gabara) (Halobacterium pharaonis).